The following is a 418-amino-acid chain: Glutamyl-tRNA reductase (418 aa).

Residues 49–52 (TCNR), Ser-109, 114–116 (EPQ), and Gln-120 each bind substrate. The Nucleophile role is filled by Cys-50. NADP(+) is bound at residue 189–194 (GAGETI).

This sequence belongs to the glutamyl-tRNA reductase family. Homodimer.

The catalysed reaction is (S)-4-amino-5-oxopentanoate + tRNA(Glu) + NADP(+) = L-glutamyl-tRNA(Glu) + NADPH + H(+). It participates in porphyrin-containing compound metabolism; protoporphyrin-IX biosynthesis; 5-aminolevulinate from L-glutamyl-tRNA(Glu): step 1/2. Its function is as follows. Catalyzes the NADPH-dependent reduction of glutamyl-tRNA(Glu) to glutamate 1-semialdehyde (GSA). The polypeptide is Glutamyl-tRNA reductase (Escherichia fergusonii (strain ATCC 35469 / DSM 13698 / CCUG 18766 / IAM 14443 / JCM 21226 / LMG 7866 / NBRC 102419 / NCTC 12128 / CDC 0568-73)).